The chain runs to 651 residues: Maternal embryonic leucine zipper kinase (651 aa).

The region spanning 13–265 (YELHETVGTG…VKHLLNHPWL (253 aa)) is the Protein kinase domain. ATP contacts are provided by residues 19–27 (VGTGGFAKV) and Lys42. Asp134 functions as the Proton acceptor in the catalytic mechanism. Residue Thr169 is modified to Phosphothreonine; by autocatalysis. At Ser173 the chain carries Phosphoserine; by autocatalysis. Positions 284-323 (IDEDCVTELSVFYKYSRTSTTRLISEWSYDHITASYLLLH) are UBA-like. The interval 328-651 (HGKAVRLKHP…VEDILSSCKV (324 aa)) is autoinhibitory region. The tract at residues 410-490 (SAPATPVVQR…TPTKKPIGTG (81 aa)) is disordered. The residue at position 414 (Thr414) is a Phosphothreonine. Over residues 423-441 (HKNEDKENSNTAVARDENV) the composition is skewed to basic and acidic residues. Phosphothreonine occurs at positions 449, 451, 481, and 483. Basic and acidic residues predominate over residues 471-483 (QTKEKNQSKETPT). A phosphoserine mark is found at Ser498, Ser505, and Ser517. Residues 602-651 (SDFGKVTMQFELEVCQLSKSEVVGIRRQRLKGDAWVYKRLVEDILSSCKV) enclose the KA1 domain.

It belongs to the protein kinase superfamily. CAMK Ser/Thr protein kinase family. SNF1 subfamily. In terms of processing, autophosphorylated: autophosphorylation of the T-loop at Thr-169 and Ser-173 is required for activation. Phosphorylated by the maturation promoting factor (MPF), composed of cdk1 and a cyclin-B. Also phosphorylated by some MAPK. Phosphorylated during oocyte maturation. Dephosphorylation destabilizes the protein. There is some ambiguity for some phosphosites: Thr-481/Thr-483 and Ser-505/Ser-517. Degraded when cells exit mitosis.

It is found in the cell membrane. It carries out the reaction L-seryl-[protein] + ATP = O-phospho-L-seryl-[protein] + ADP + H(+). The enzyme catalyses L-threonyl-[protein] + ATP = O-phospho-L-threonyl-[protein] + ADP + H(+). With respect to regulation, activated by autophosphorylation of the T-loop at Thr-169 and Ser-173: in contrast to other members of the SNF1 subfamily, phosphorylation at Thr-169 is not mediated by STK11/LKB1 but via autophosphorylation instead. In terms of biological role, serine/threonine-protein kinase involved in various processes such as cell cycle regulation, self-renewal of stem cells, apoptosis and splicing regulation. Also plays a role in primitive hematopoiesis, possibly by affecting the expression of genes critical for hematopoiesis. Plays a role in cytokinesis during early development. This Xenopus laevis (African clawed frog) protein is Maternal embryonic leucine zipper kinase (melk).